The sequence spans 392 residues: MDKSFILNKTSSRSLARRGQLFTAHGKVETPVFCPVGSQAAVKTLTPEDLKSVNINMILSNTYHLYLRPGIPIIKEMGGLHKFMNWDEVILTDSGGYQIFSLANLRKLDEGGVSFRSHIDGSTRYITPEDAVSFQQDLGSDIAMVLDECPHSEASENEVLAAMERTHQWAKRCLAAHTLKIQHLFAIVQGGLSPELRRQSAEYLASLDFPGYALGGLSLGEPKDITFETVRHTLRFLPENKPRYLMGVGAPEDLLEGVSCGVDIFDCVLPTRVARNGAFFSRLGRLNIRNAAFATQKGPIDPECNCYTCRNYSAAYLHHLFRCEEILAYRLATIHNIAFLSNLMQEIRTSIEKDCFEEFKADFLSRYQPTNEAIRIEQKQKWLFGRNGEPPS.

The active-site Proton acceptor is Asp93. Substrate-binding positions include 93–97, Asp147, Gln189, and Gly216; that span reads DSGGY. Positions 247–253 are RNA binding; it reads GVGAPED. Asp266 acts as the Nucleophile in catalysis. An RNA binding; important for wobble base 34 recognition region spans residues 271–275; sequence TRVAR. 4 residues coordinate Zn(2+): Cys304, Cys306, Cys309, and His335.

It belongs to the queuine tRNA-ribosyltransferase family. In terms of assembly, homodimer. Within each dimer, one monomer is responsible for RNA recognition and catalysis, while the other monomer binds to the replacement base PreQ1. Zn(2+) serves as cofactor.

The enzyme catalyses 7-aminomethyl-7-carbaguanine + guanosine(34) in tRNA = 7-aminomethyl-7-carbaguanosine(34) in tRNA + guanine. It participates in tRNA modification; tRNA-queuosine biosynthesis. Functionally, catalyzes the base-exchange of a guanine (G) residue with the queuine precursor 7-aminomethyl-7-deazaguanine (PreQ1) at position 34 (anticodon wobble position) in tRNAs with GU(N) anticodons (tRNA-Asp, -Asn, -His and -Tyr). Catalysis occurs through a double-displacement mechanism. The nucleophile active site attacks the C1' of nucleotide 34 to detach the guanine base from the RNA, forming a covalent enzyme-RNA intermediate. The proton acceptor active site deprotonates the incoming PreQ1, allowing a nucleophilic attack on the C1' of the ribose to form the product. After dissociation, two additional enzymatic reactions on the tRNA convert PreQ1 to queuine (Q), resulting in the hypermodified nucleoside queuosine (7-(((4,5-cis-dihydroxy-2-cyclopenten-1-yl)amino)methyl)-7-deazaguanosine). This chain is Queuine tRNA-ribosyltransferase, found in Dehalococcoides mccartyi (strain CBDB1).